A 216-amino-acid chain; its full sequence is Fibroblast growth factor 17 (216 aa).

The N-terminal stretch at 1-22 is a signal peptide; the sequence is MGAARLLPNLTLCLQLLILCCQ. N-linked (GlcNAc...) asparagine glycosylation is present at Asn137. The tract at residues 190 to 216 is disordered; the sequence is EKQKQFEFVGSAPTRRTKRTRRPQPLT. Basic residues predominate over residues 204–216; it reads RRTKRTRRPQPLT.

This sequence belongs to the heparin-binding growth factors family. As to quaternary structure, interacts with FGFR3 and FGFR4. In terms of tissue distribution, preferentially expressed in the embryonic brain.

The protein resides in the secreted. In terms of biological role, plays an important role in the regulation of embryonic development and as signaling molecule in the induction and patterning of the embryonic brain. Required for normal brain development. In Homo sapiens (Human), this protein is Fibroblast growth factor 17 (FGF17).